The primary structure comprises 156 residues: Small ribosomal subunit protein uS7 (156 aa).

It belongs to the universal ribosomal protein uS7 family. Part of the 30S ribosomal subunit. Contacts proteins S9 and S11.

Functionally, one of the primary rRNA binding proteins, it binds directly to 16S rRNA where it nucleates assembly of the head domain of the 30S subunit. Is located at the subunit interface close to the decoding center, probably blocks exit of the E-site tRNA. The chain is Small ribosomal subunit protein uS7 from Rhodospirillum centenum (strain ATCC 51521 / SW).